A 310-amino-acid chain; its full sequence is Putative S-adenosyl-L-methionine-dependent methyltransferase MMAR_3534 (310 aa).

Residues Asp-131 and 160–161 contribute to the S-adenosyl-L-methionine site; that span reads DL.

Belongs to the UPF0677 family.

Its function is as follows. Exhibits S-adenosyl-L-methionine-dependent methyltransferase activity. The chain is Putative S-adenosyl-L-methionine-dependent methyltransferase MMAR_3534 from Mycobacterium marinum (strain ATCC BAA-535 / M).